Here is a 152-residue protein sequence, read N- to C-terminus: Transcriptional regulator MraZ (152 aa).

SpoVT-AbrB domains are found at residues 5–52 and 81–124; these read ASAI…PLDE and AHEC…DETA.

It belongs to the MraZ family. In terms of assembly, forms oligomers.

The protein localises to the cytoplasm. Its subcellular location is the nucleoid. The protein is Transcriptional regulator MraZ of Shewanella woodyi (strain ATCC 51908 / MS32).